A 563-amino-acid polypeptide reads, in one-letter code: Adenine deaminase (563 aa).

It belongs to the metallo-dependent hydrolases superfamily. Adenine deaminase family. Mn(2+) serves as cofactor.

The enzyme catalyses adenine + H2O + H(+) = hypoxanthine + NH4(+). In Lactiplantibacillus plantarum (strain ATCC BAA-793 / NCIMB 8826 / WCFS1) (Lactobacillus plantarum), this protein is Adenine deaminase.